The primary structure comprises 931 residues: Isoleucine--tRNA ligase (931 aa).

A 'HIGH' region motif is present at residues 58 to 68 (PYANGHLHCGH). Position 559 (Glu559) interacts with L-isoleucyl-5'-AMP. The short motif at 600–604 (KLSKS) is the 'KMSKS' region element. Lys603 contributes to the ATP binding site. Zn(2+) contacts are provided by Cys894, Cys897, Cys914, and Cys917.

It belongs to the class-I aminoacyl-tRNA synthetase family. IleS type 1 subfamily. As to quaternary structure, monomer. The cofactor is Zn(2+).

The protein resides in the cytoplasm. The catalysed reaction is tRNA(Ile) + L-isoleucine + ATP = L-isoleucyl-tRNA(Ile) + AMP + diphosphate. Catalyzes the attachment of isoleucine to tRNA(Ile). As IleRS can inadvertently accommodate and process structurally similar amino acids such as valine, to avoid such errors it has two additional distinct tRNA(Ile)-dependent editing activities. One activity is designated as 'pretransfer' editing and involves the hydrolysis of activated Val-AMP. The other activity is designated 'posttransfer' editing and involves deacylation of mischarged Val-tRNA(Ile). This is Isoleucine--tRNA ligase from Legionella pneumophila (strain Paris).